The primary structure comprises 1392 residues: ATP-dependent helicase/nuclease subunit A (1392 aa).

Residues 4–595 (FKPTPAQSKA…IVLGENFRSM (592 aa)) enclose the UvrD-like helicase ATP-binding domain. 25–32 (ASAGSGKT) provides a ligand contact to ATP. One can recognise a UvrD-like helicase C-terminal domain in the interval 623-929 (AHLKYAATYY…NVMTIHGSKG (307 aa)).

It belongs to the helicase family. AddA subfamily. In terms of assembly, heterodimer of AddA and AddB/RexB. Mg(2+) serves as cofactor.

It catalyses the reaction Couples ATP hydrolysis with the unwinding of duplex DNA by translocating in the 3'-5' direction.. The catalysed reaction is ATP + H2O = ADP + phosphate + H(+). The heterodimer acts as both an ATP-dependent DNA helicase and an ATP-dependent, dual-direction single-stranded exonuclease. Recognizes the chi site generating a DNA molecule suitable for the initiation of homologous recombination. The AddA nuclease domain is required for chi fragment generation; this subunit has the helicase and 3' -&gt; 5' nuclease activities. This chain is ATP-dependent helicase/nuclease subunit A, found in Limosilactobacillus reuteri subsp. reuteri (strain JCM 1112) (Lactobacillus reuteri).